A 159-amino-acid polypeptide reads, in one-letter code: Carbohydrate sulfotransferase 15 (159 aa).

Topologically, residues 1–159 (SGTTDFYRRI…YQPHNERLVK (159 aa)) are lumenal. Residues asparagine 42 and asparagine 112 are each glycosylated (N-linked (GlcNAc...) asparagine).

It belongs to the sulfotransferase 1 family. A divalent metal cation serves as cofactor. The cofactor is glutathione.

The protein localises to the golgi apparatus membrane. The enzyme catalyses dermatan 4'-sulfate + n 3'-phosphoadenylyl sulfate = dermatan 4',6'-bissulfate + n adenosine 3',5'-bisphosphate + n H(+). It carries out the reaction chondroitin 4'-sulfate + n 3'-phosphoadenylyl sulfate = chondroitin 4',6'-bissulfate + n adenosine 3',5'-bisphosphate + n H(+). In terms of biological role, sulfotransferase that transfers sulfate from 3'-phosphoadenosine 5'-phosphosulfate (PAPS) to the C-6 hydroxyl group of the GalNAc 4-sulfate residue of chondroitin sulfate A and forms chondroitin sulfate E containing GlcA-GalNAc(4,6-SO(4)) repeating units. In Nototodarus sloanii (Wellington flying squid), this protein is Carbohydrate sulfotransferase 15 (GALNAC4S6ST).